A 362-amino-acid chain; its full sequence is MIHIENLSKTYATPHGRFEALRGINLHIQQGEVFGIIGPSGAGKSTLVQCINLLERPDQGSIAIGGQALVGLGEAQLRNQRRRIGMVFQGFNLLARRTVYGNVALPLEIAGVARAEIPARVERLLALVGLEHLRDRYPSQISGGQKQRVGIARALANDPDVLLSDEATSALDPETTHNILALLRDINRKTGVTVVMITHQMEVVREICDRVAVLSHGEVVELGSTREVFAAPRHEVTRAMVSAATASDLSEATLAAVKQRIDALAAAEPGRAVRLWRLSLKGVAAGEPLWSDLAREFALDVSLVQARVEDIQGVAVGTLFVLAQGAPHAVKDALAALAAREITVEEIAHEPATDRSAYHVAA.

The 240-residue stretch at 2–241 folds into the ABC transporter domain; that stretch reads IHIENLSKTY…PRHEVTRAMV (240 aa). ATP is bound at residue 38 to 45; it reads GPSGAGKS.

This sequence belongs to the ABC transporter superfamily. Methionine importer (TC 3.A.1.24) family. In terms of assembly, the complex is composed of two ATP-binding proteins (MetN), two transmembrane proteins (MetI) and a solute-binding protein (MetQ).

Its subcellular location is the cell inner membrane. The catalysed reaction is L-methionine(out) + ATP + H2O = L-methionine(in) + ADP + phosphate + H(+). The enzyme catalyses D-methionine(out) + ATP + H2O = D-methionine(in) + ADP + phosphate + H(+). In terms of biological role, part of the ABC transporter complex MetNIQ involved in methionine import. Responsible for energy coupling to the transport system. In Bordetella bronchiseptica (strain ATCC BAA-588 / NCTC 13252 / RB50) (Alcaligenes bronchisepticus), this protein is Methionine import ATP-binding protein MetN.